We begin with the raw amino-acid sequence, 209 residues long: Kynurenine formamidase (209 aa).

Trp-20 is a substrate binding site. Residues His-50, His-54, and Asp-56 each contribute to the Zn(2+) site. His-60 functions as the Proton donor/acceptor in the catalytic mechanism. Residues His-161 and Glu-173 each coordinate Zn(2+).

This sequence belongs to the Cyclase 1 superfamily. KynB family. Homodimer. Zn(2+) serves as cofactor.

The enzyme catalyses N-formyl-L-kynurenine + H2O = L-kynurenine + formate + H(+). It functions in the pathway amino-acid degradation; L-tryptophan degradation via kynurenine pathway; L-kynurenine from L-tryptophan: step 2/2. Functionally, catalyzes the hydrolysis of N-formyl-L-kynurenine to L-kynurenine, the second step in the kynurenine pathway of tryptophan degradation. The sequence is that of Kynurenine formamidase from Bacillus mycoides (strain KBAB4) (Bacillus weihenstephanensis).